We begin with the raw amino-acid sequence, 564 residues long: Malignant brain tumor repeat protein 1 (564 aa).

MBT repeat units follow at residues 64-176, 205-327, 331-442, and 450-549; these read FTWS…MKWL, RPTE…TKAT, LEHS…LDRL, and FKWE…LRHP.

Interacts with histone H3 that is trimethylated at 'Lys-9' (H3K9me3).

The protein is Malignant brain tumor repeat protein 1 (mbtr-1) of Caenorhabditis elegans.